A 172-amino-acid chain; its full sequence is Large ribosomal subunit protein uL10 (172 aa).

The protein belongs to the universal ribosomal protein uL10 family. Part of the ribosomal stalk of the 50S ribosomal subunit. The N-terminus interacts with L11 and the large rRNA to form the base of the stalk. The C-terminus forms an elongated spine to which L12 dimers bind in a sequential fashion forming a multimeric L10(L12)X complex.

Functionally, forms part of the ribosomal stalk, playing a central role in the interaction of the ribosome with GTP-bound translation factors. This is Large ribosomal subunit protein uL10 from Rhizobium rhizogenes (strain K84 / ATCC BAA-868) (Agrobacterium radiobacter).